Here is a 326-residue protein sequence, read N- to C-terminus: tRNA-dihydrouridine(20/20a) synthase (326 aa).

Residues 11–13 and Q63 each bind FMN; that span reads PML. C93 acts as the Proton donor in catalysis. FMN-binding positions include K132, H165, 205 to 207, and 227 to 228; these read NGG and GR.

Belongs to the Dus family. DusA subfamily. FMN is required as a cofactor.

The enzyme catalyses 5,6-dihydrouridine(20) in tRNA + NADP(+) = uridine(20) in tRNA + NADPH + H(+). The catalysed reaction is 5,6-dihydrouridine(20) in tRNA + NAD(+) = uridine(20) in tRNA + NADH + H(+). It carries out the reaction 5,6-dihydrouridine(20a) in tRNA + NADP(+) = uridine(20a) in tRNA + NADPH + H(+). It catalyses the reaction 5,6-dihydrouridine(20a) in tRNA + NAD(+) = uridine(20a) in tRNA + NADH + H(+). In terms of biological role, catalyzes the synthesis of 5,6-dihydrouridine (D), a modified base found in the D-loop of most tRNAs, via the reduction of the C5-C6 double bond in target uridines. Specifically modifies U20 and U20a in tRNAs. The polypeptide is tRNA-dihydrouridine(20/20a) synthase (Vibrio vulnificus (strain CMCP6)).